Here is a 228-residue protein sequence, read N- to C-terminus: Cytochrome P450 monooxygenase ataY (228 aa).

Cysteine 216 provides a ligand contact to heme.

Belongs to the cytochrome P450 family. The cofactor is heme.

It participates in mycotoxin biosynthesis. Its function is as follows. Cytochrome P450 monooxygenase; part of the gene cluster that mediates the biosynthesis of acetylaranotin, a member of the epipolythiodioxopiperazine (ETP) class of toxins characterized by a disulfide-bridged cyclic dipeptide. The first step of acetylaranotin biosynthesis is performed by the NRPS ataP which produces diketopiperazine cyclo-L-Phe-L-Phe via the condensation of 2 phenylalanines (L-Phe). The ataC domain of ataTC then catalyzes the formation of bishydroxylation of cyclo-L-Phe-L-Phe. The glutathione S-transferase domain ataG in ataIMG further catalyzes the conjugation of two glutathiones to the bishydroxylated intermediate. Next, the dipeptidase ataJ removes the Glu residues. The following step is performed by the carbon sulfur lyase domain ataI of ataIMG which may convert the bis-cysteinyl adduct to yield an epidithiol intermediate. The ataT domain from ataTC then catalyzes the oxidation of the free dithiols, followed by a cyclization step catalyzed by the cytochrome P450 ataF. AtaF probably acts as an epoxidase to promote a dual epoxidation formation at C8 and C9 along with C8' and C9', followed by the spontaneous nucleophilic attack of the amide nitrogens N10 and N10' to yield an intermediate with the pyrrolidine partial structure. The final steps of acetylaranotin biosynthesis involve the acetylation and ring rearrangement of an epitetrathiodiketopiperazine intermediate to produce acetylaranotin. AtaH probably catalyzes the acetylation of epitetrathiodiketopiperazine to produce a diacetate and ataY is responsible for the formation of the dihydrooxepin moiety that converts the diacetate intermediate to acetylaranotin via acetylapoaranotin. Both enzymes could function independently in the absence of the other. The acetylaranotin bis-thiomethyltransferase ataS located outside of acetylaranotin gene cluster is the main thiomethyltransferase responsible for converting acetylaranotin and its related intermediates to their methylated forms. The sequence is that of Cytochrome P450 monooxygenase ataY from Aspergillus terreus (strain NIH 2624 / FGSC A1156).